We begin with the raw amino-acid sequence, 456 residues long: MPQNTLNIVILAAGKGTRMYSKMPKVLHRIGGKPMLGRVIDTAAALNPQNICVVVGHGKEQVLDTVKRDVVWVEQTEQLGTGHAVKTALPHLAAEGRTLVLYGDVPLIDVETLKTLLEAAGDKVGLLTDVPTDPTGLGRIIRDGNGSVTAIVEEKDASTAQKAVKETNTGILVLPNAKLENWLNSLSSNNAQGEYYLTDLIAKAVSDGIKVRPVRVRASHLAAGVNNKLQLAELERIFQTGQAQELLKAGVTLHDPARFDLRGRLKHGQDVVIDANCIFEGEIELGDNVEIGASCVIKNAKIGANTKIAPFSHLEDCEVGENNRIGPYARLRPQARLADDVHVGNFVEIKNAAIGKGTKANHLTYIGDAEVGSKTNFGAGTIIANYDGVHKHKTVIGNEVRIGSNCVLVAPVTLGNKVTTGAGSAITRNVEDGKLALARARQTVIEGWVRPEKDKQ.

The segment at 1–228 (MPQNTLNIVI…SHLAAGVNNK (228 aa)) is pyrophosphorylase. Residues 11-14 (LAAG), lysine 25, glutamine 75, 80-81 (GT), 102-104 (YGD), glycine 138, glutamate 153, asparagine 168, and asparagine 226 each bind UDP-N-acetyl-alpha-D-glucosamine. Aspartate 104 is a binding site for Mg(2+). Asparagine 226 is a binding site for Mg(2+). The interval 229 to 249 (LQLAELERIFQTGQAQELLKA) is linker. Positions 250–456 (GVTLHDPARF…GWVRPEKDKQ (207 aa)) are N-acetyltransferase. 2 residues coordinate UDP-N-acetyl-alpha-D-glucosamine: arginine 332 and lysine 350. Residue histidine 362 is the Proton acceptor of the active site. 2 residues coordinate UDP-N-acetyl-alpha-D-glucosamine: tyrosine 365 and asparagine 376. Acetyl-CoA is bound by residues alanine 379, 385–386 (NY), serine 404, alanine 422, and arginine 439.

In the N-terminal section; belongs to the N-acetylglucosamine-1-phosphate uridyltransferase family. It in the C-terminal section; belongs to the transferase hexapeptide repeat family. In terms of assembly, homotrimer. Mg(2+) is required as a cofactor.

The protein resides in the cytoplasm. It carries out the reaction alpha-D-glucosamine 1-phosphate + acetyl-CoA = N-acetyl-alpha-D-glucosamine 1-phosphate + CoA + H(+). The catalysed reaction is N-acetyl-alpha-D-glucosamine 1-phosphate + UTP + H(+) = UDP-N-acetyl-alpha-D-glucosamine + diphosphate. Its pathway is nucleotide-sugar biosynthesis; UDP-N-acetyl-alpha-D-glucosamine biosynthesis; N-acetyl-alpha-D-glucosamine 1-phosphate from alpha-D-glucosamine 6-phosphate (route II): step 2/2. The protein operates within nucleotide-sugar biosynthesis; UDP-N-acetyl-alpha-D-glucosamine biosynthesis; UDP-N-acetyl-alpha-D-glucosamine from N-acetyl-alpha-D-glucosamine 1-phosphate: step 1/1. It functions in the pathway bacterial outer membrane biogenesis; LPS lipid A biosynthesis. Catalyzes the last two sequential reactions in the de novo biosynthetic pathway for UDP-N-acetylglucosamine (UDP-GlcNAc). The C-terminal domain catalyzes the transfer of acetyl group from acetyl coenzyme A to glucosamine-1-phosphate (GlcN-1-P) to produce N-acetylglucosamine-1-phosphate (GlcNAc-1-P), which is converted into UDP-GlcNAc by the transfer of uridine 5-monophosphate (from uridine 5-triphosphate), a reaction catalyzed by the N-terminal domain. This is Bifunctional protein GlmU from Neisseria meningitidis serogroup C (strain 053442).